We begin with the raw amino-acid sequence, 865 residues long: cGMP-specific 3',5'-cyclic phosphodiesterase (865 aa).

Ser92 carries the post-translational modification Phosphoserine. GAF domains lie at 154–304 and 336–493; these read DVTA…GIVL and SLEV…GLGI. The PDEase domain maps to 526–850; that stretch reads ETRELQALSA…QKWQALAEQQ (325 aa). His603 serves as the catalytic Proton donor. Zn(2+) contacts are provided by His607, His643, Asp644, and Asp754. Asp644 provides a ligand contact to Mg(2+). Gln807 contacts 3',5'-cyclic GMP.

The protein belongs to the cyclic nucleotide phosphodiesterase family. It depends on Zn(2+) as a cofactor. The cofactor is Mg(2+). In terms of processing, phosphorylation is regulated by binding of cGMP to the two allosteric sites. Phosphorylation by PRKG1 leads to its activation.

It carries out the reaction 3',5'-cyclic GMP + H2O = GMP + H(+). It participates in purine metabolism; 3',5'-cyclic GMP degradation; GMP from 3',5'-cyclic GMP: step 1/1. In terms of biological role, plays a role in signal transduction by regulating the intracellular concentration of cyclic nucleotides. This phosphodiesterase catalyzes the specific hydrolysis of cGMP to 5'-GMP. Specifically regulates nitric-oxide-generated cGMP. This chain is cGMP-specific 3',5'-cyclic phosphodiesterase (Pde5a), found in Mus musculus (Mouse).